Reading from the N-terminus, the 138-residue chain is Glutaredoxin-C7 (138 aa).

Residues 17–40 (SSTRGGGGGGMLGLTLFDPPGGEQ) are disordered. One can recognise a Glutaredoxin domain in the interval 42 to 137 (AERIGRLVRE…PRLREVGALC (96 aa)). Cysteine 62 and cysteine 65 are oxidised to a cystine.

Belongs to the glutaredoxin family. CC-type subfamily.

Its subcellular location is the cytoplasm. Has a glutathione-disulfide oxidoreductase activity in the presence of NADPH and glutathione reductase. Reduces low molecular weight disulfides and proteins. The sequence is that of Glutaredoxin-C7 (GRXC7) from Oryza sativa subsp. japonica (Rice).